The primary structure comprises 594 residues: Alanine--tRNA ligase (594 aa).

Residues histidine 456, histidine 460, cysteine 558, and histidine 562 each coordinate Zn(2+).

The protein belongs to the class-II aminoacyl-tRNA synthetase family. Zn(2+) serves as cofactor.

The protein resides in the cytoplasm. It carries out the reaction tRNA(Ala) + L-alanine + ATP = L-alanyl-tRNA(Ala) + AMP + diphosphate. Catalyzes the attachment of alanine to tRNA(Ala) in a two-step reaction: alanine is first activated by ATP to form Ala-AMP and then transferred to the acceptor end of tRNA(Ala). Also edits incorrectly charged Ser-tRNA(Ala) and Gly-tRNA(Ala) via its editing domain. This Borreliella afzelii (strain PKo) (Borrelia afzelii) protein is Alanine--tRNA ligase (alaS).